The sequence spans 600 residues: FERM domain-containing protein 3 (600 aa).

Residues 31–311 (MRCTIRLLDD…ENQAFYKYAK (281 aa)) enclose the FERM domain. Positions 413-440 (SAPVLGNSPARGLETTADVTHDEEESIR) are disordered. The helical transmembrane segment at 534–554 (LLLAAIGLLMVVLPLLLILLE) threads the bilayer.

It localises to the membrane. The protein is FERM domain-containing protein 3 (frmd3) of Xenopus tropicalis (Western clawed frog).